The following is a 227-amino-acid chain: UPF0659 protein YMR090W (227 aa).

The protein belongs to the UPF0659 family.

It localises to the cytoplasm. The polypeptide is UPF0659 protein YMR090W (Saccharomyces cerevisiae (strain ATCC 204508 / S288c) (Baker's yeast)).